A 129-amino-acid polypeptide reads, in one-letter code: Azurin iso-2 (129 aa).

Residues 1–129 (ASCETTVTSG…MMRGTLKLEE (129 aa)) enclose the Plastocyanin-like domain. Cysteine 3 and cysteine 26 are oxidised to a cystine. The Cu cation site is built by histidine 46, cysteine 112, histidine 117, and methionine 121.

Its subcellular location is the periplasm. In terms of biological role, this methylothroph organism uses azurin in the oxidation of methylamine. Iso-2 is probably the acceptor of electrons from methylamine dehydrogenase. The protein is Azurin iso-2 of Methylomonas sp. (strain J).